Here is a 440-residue protein sequence, read N- to C-terminus: MLETSQTIPELVNWTREREFSLSLSTERLAFLLAIAIYNNERLDGEMLETDLIDIFRHISNTFEQSAETISTRANNSINELVKQRFLNRFSSEFTEGLSIYRLTPLGVGVSDYYIRQREFSALRLSVQLSIVADEIQRASEAAEEGGDEHYWRKNVFAPLKYSVAEIFDSIDLSQRMMDENQQHIKEEIAELLTKDWQTAIASCERLLDETSGNLRELQDTLNAAGDKLQSQLLRIQDCVIGHDNLYFVEQLIVDLQAKLDRIISWGQQAIDLWIGYDRHVHKFIRTAIDLDKNRVFSQRLRQSIHHYFDHPWFLWIAQAERLIDLREEELTLREEEALGELPEELQYESLADLHEQIVETMQSLLIEYRLQNTPIDLSEVLTAQLKQYPLAKHFDIARIIIDQAVRLGLAQDDLNGIYPNWRSINENGAEVQAHVIDKY.

The tract at residues 208-236 (LDETSGNLRELQDTLNAAGDKLQSQLLRI) is leucine-zipper.

The protein belongs to the MukF family. Interacts, and probably forms a ternary complex, with MukE and MukB via its C-terminal region. The complex formation is stimulated by calcium or magnesium. It is required for an interaction between MukE and MukB.

The protein resides in the cytoplasm. It is found in the nucleoid. In terms of biological role, involved in chromosome condensation, segregation and cell cycle progression. May participate in facilitating chromosome segregation by condensation DNA from both sides of a centrally located replisome during cell division. Not required for mini-F plasmid partitioning. Probably acts via its interaction with MukB and MukE. Overexpression results in anucleate cells. It has a calcium binding activity. This is Chromosome partition protein MukF from Histophilus somni (strain 129Pt) (Haemophilus somnus).